The sequence spans 526 residues: MDVRFYPPPAQPAAAPDAPCLGPSPCLDPYYCNKFDGENMYMSMTEPSQDYVPASQSYPGPSLESEDFNIPPITPPSLPDHSLVHLNEVESGYHSLCHPMNHNGLLPFHPQNMDLPEITVSNMLGQDGTLLSNSISVMPDIRNPEGTQYSSHPQMAAMRPRGQPADIRQQPGMMPHGQLTTINQSQLSAQLGLNMGGSNVPHNSPSPPGSKSATPSPSSSVHEDEGDDTSKINGGEKRPASDMGKKPKTPKKKKKKDPNEPQKPVSAYALFFRDTQAAIKGQNPNATFGEVSKIVASMWDGLGEEQKQVYKKKTEAAKKEYLKQLAAYRASLVSKSYSEPVDVKTSQPPQLINSKPSVFHGPSQAHSALYLSSHYHQQPGMNPHLTAMHPSLPRNIAPKPNNQMPVTVSIANMAVSPPPPLQISPPLHQHLNMQQHQPLTMQQPLGNQLPMQVQSALHSPTMQQGFTLQPDYQTIINPTSTAAQVVTQAMEYVRSGCRNPPPQPVDWNNDYCSSGGMQRDKALYLT.

Disordered stretches follow at residues 138–178 (MPDI…PHGQ) and 192–264 (GLNM…PQKP). The segment covering 192 to 203 (GLNMGGSNVPHN) has biased composition (polar residues). The span at 209 to 220 (GSKSATPSPSSS) shows a compositional bias: low complexity. Over residues 228 to 245 (DTSKINGGEKRPASDMGK) the composition is skewed to basic and acidic residues. The Nuclear localization signal motif lies at 237-256 (KRPASDMGKKPKTPKKKKKK). Basic residues predominate over residues 246 to 256 (KPKTPKKKKKK). A DNA-binding region (HMG box) is located at residues 261–329 (PQKPVSAYAL…EYLKQLAAYR (69 aa)).

The protein belongs to the high motility group (HMG) box superfamily. In terms of assembly, interacts with HBO1 complex composed at least of KAT7/HBO1, ING4, MEAF6, and JADE2; this complex is involved in histone acetylation. Interacts with DNMT1, LEO1, PAF1, SAP130 and SIN3A; these interactors regulate chromatin remodeling. Interacts with an array of proteins involved in RNA processing and translation and DNA replication. In terms of tissue distribution, expressed in NK cells. Highly expressed in tumor-infiltrating CD8-positive T cells (at protein level).

Its subcellular location is the nucleus. Functionally, transcriptional regulator with a major role in neural stem cell commitment and corticogenesis as well as in lymphoid cell development and lymphoid tissue organogenesis. Binds to GC-rich DNA sequences in the proximity of transcription start sites and may alter chromatin structure, modifying access of transcription factors to DNA. During cortical development, controls the neural stem cell pool by inhibiting the switch from proliferative to differentiating progenitors. Beyond progenitor cells, promotes neurite outgrowth in newborn neurons migrating to reach the cortical plate. May activate or repress critical genes for neural stem cell fate such as SOX2, EOMES and ROBO2. Plays an essential role in the development of lymphoid tissue-inducer (LTi) cells, a subset necessary for the formation of secondary lymphoid organs: peripheral lymph nodes and Peyer's patches. Acts as a developmental checkpoint and regulates thymocyte positive selection toward T cell lineage commitment. Required for the development of various T cell subsets, including CD4-positive helper T cells, CD8-positive cytotoxic T cells, regulatory T cells and CD1D-dependent natural killer T (NKT) cells. Required for the differentiation of common lymphoid progenitors (CMP) to innate lymphoid cells (ILC). May regulate the NOTCH-mediated gene program, promoting differentiation of the ILC lineage. Required at the progenitor phase of NK cell development in the bone marrow to specify NK cell lineage commitment. Upon chronic antigen stimulation, diverts T cell development by promoting the generation of exhaustive T cells, while suppressing effector and memory T cell programming. May regulate the expression of genes encoding inhibitory receptors such as PDCD1 and induce the exhaustion program, to prevent the overstimulation of T cells and activation-induced cell death. The polypeptide is Thymocyte selection-associated high mobility group box protein TOX (Homo sapiens (Human)).